We begin with the raw amino-acid sequence, 252 residues long: Adaptation to cold protein B (252 aa).

In terms of assembly, interacts with AtcC, but not with AtcA and AtcJ. Interacts with the RNA polymerase subunits RpoB and RpoC.

In terms of biological role, involved in cold adaptation. Directly interacts with the RNA polymerase and decreases its activity. May direct the DnaK chaperone to the RNA polymerase to sustain life at low temperatures. Overproduction prevents bacterial growth due to RNA polymerase inhibition. This chain is Adaptation to cold protein B, found in Shewanella oneidensis (strain ATCC 700550 / JCM 31522 / CIP 106686 / LMG 19005 / NCIMB 14063 / MR-1).